A 157-amino-acid chain; its full sequence is Probable succinate transporter subunit YjjB (157 aa).

The next 4 helical transmembrane spans lie at 15 to 35, 50 to 70, 87 to 107, and 121 to 141; these read ILAA…VQAL, MILM…SMLV, VFTV…TAMI, and LMIT…ALSV.

The protein belongs to the ThrE exporter (TC 2.A.79) family. The transporter is composed of YjjB and YjjP.

It localises to the cell inner membrane. Its function is as follows. Involved in succinate export with YjjP. Both proteins are required for export. This chain is Probable succinate transporter subunit YjjB, found in Shigella dysenteriae serotype 1 (strain Sd197).